The chain runs to 446 residues: uncharacterized protein (446 aa).

Transmembrane regions (helical) follow at residues 69–89, 98–118, 169–189, and 247–267; these read FWLWVVAATFAFFTGFSVTYL, FFLVLAGVLGMNTLMLAVWLA, HSLWLCTLLGMLVSVLLLLLV, and GLLVGSIACYGILPRLLAWVV.

The protein resides in the membrane. This is an uncharacterized protein from Neisseria meningitidis serogroup B (strain ATCC BAA-335 / MC58).